The chain runs to 170 residues: Opacity-related protein POPM3 (170 aa).

Belongs to the opacity porin family.

Its subcellular location is the cell outer membrane. In Neisseria meningitidis serogroup C, this protein is Opacity-related protein POPM3 (opr).